A 281-amino-acid chain; its full sequence is Protoheme IX farnesyltransferase (281 aa).

Helical transmembrane passes span 13–33, 38–58, 85–105, 107–127, 132–152, 161–181, 206–226, 227–247, and 261–281; these read VIWLLVLSALVGYIAAAGPLV, LIELTVVGFLSTGGSAAFNMY, ALTFSIAVSLSGFTLSYLWLG, WVTLMIALGWFFYAVLYTIML, WLNIVIGGFAGNAALLSGWIM, ILLSMVIYVWIPAHIWSLAYY, IISILNLVSIIYMLVLYQLYM, AKLIGYILVIPATLAGIIVTI, and MFKATSPILLLFLLAVIISRI.

The protein belongs to the UbiA prenyltransferase family. Protoheme IX farnesyltransferase subfamily.

It localises to the cell membrane. It catalyses the reaction heme b + (2E,6E)-farnesyl diphosphate + H2O = Fe(II)-heme o + diphosphate. The protein operates within porphyrin-containing compound metabolism; heme O biosynthesis; heme O from protoheme: step 1/1. In terms of biological role, converts heme B (protoheme IX) to heme O by substitution of the vinyl group on carbon 2 of heme B porphyrin ring with a hydroxyethyl farnesyl side group. This is Protoheme IX farnesyltransferase from Caldivirga maquilingensis (strain ATCC 700844 / DSM 13496 / JCM 10307 / IC-167).